The following is a 167-amino-acid chain: Zymogen granule membrane protein 16 (167 aa).

Residues 1–16 form the signal peptide; it reads MLTVALLALLCASASG. Residues 24–159 enclose the Jacalin-type lectin domain; that stretch reads SSYSGEYGGG…IDAIGLHWDV (136 aa).

The protein belongs to the jacalin lectin family. As to expression, highly expressed in liver. Detected at lower levels in colon, ileum and jejunum.

The protein localises to the secreted. The protein resides in the extracellular space. It localises to the extracellular matrix. Its subcellular location is the zymogen granule lumen. It is found in the golgi apparatus lumen. May play a role in protein trafficking. May act as a linker molecule between the submembranous matrix on the luminal side of zymogen granule membrane (ZGM) and aggregated secretory proteins during granule formation in the TGN. This Homo sapiens (Human) protein is Zymogen granule membrane protein 16 (ZG16).